The sequence spans 148 residues: 3-hydroxyacyl-[acyl-carrier-protein] dehydratase FabZ (148 aa).

Residue histidine 47 is part of the active site.

This sequence belongs to the thioester dehydratase family. FabZ subfamily.

It is found in the cytoplasm. The catalysed reaction is a (3R)-hydroxyacyl-[ACP] = a (2E)-enoyl-[ACP] + H2O. Its function is as follows. Involved in unsaturated fatty acids biosynthesis. Catalyzes the dehydration of short chain beta-hydroxyacyl-ACPs and long chain saturated and unsaturated beta-hydroxyacyl-ACPs. The sequence is that of 3-hydroxyacyl-[acyl-carrier-protein] dehydratase FabZ from Hydrogenobaculum sp. (strain Y04AAS1).